A 154-amino-acid polypeptide reads, in one-letter code: Small ribosomal subunit protein bS18 (154 aa).

Positions 1-82 (MEKKTTKKAT…PFAKYNRGYP (82 aa)) are disordered. Positions 8–19 (KATASKTTTTKK) are enriched in low complexity. Basic and acidic residues predominate over residues 20-32 (AAAEKTEIKETKK). Residues 33–49 (TTTTKTSTAKKATTASV) are compositionally biased toward low complexity. Residues 50–69 (EKTEVKETKKSSDNKKEFNP) show a composition bias toward basic and acidic residues.

The protein belongs to the bacterial ribosomal protein bS18 family. Part of the 30S ribosomal subunit. Forms a tight heterodimer with protein bS6.

Functionally, binds as a heterodimer with protein bS6 to the central domain of the 16S rRNA, where it helps stabilize the platform of the 30S subunit. This chain is Small ribosomal subunit protein bS18, found in Malacoplasma penetrans (strain HF-2) (Mycoplasma penetrans).